The chain runs to 348 residues: Histone PARylation factor 1 (348 aa).

Over residues 1–10 (MAGRGKRKPR) the composition is skewed to basic residues. Residues 1–38 (MAGRGKRKPRSLPQTETPNGEVKKAKEGLKDDKTSVGE) form a disordered region. The span at 21–38 (EVKKAKEGLKDDKTSVGE) shows a compositional bias: basic and acidic residues. Residues 170–200 (LQKKKKEKRQQKDDAALNRLEEDLKREAERL) adopt a coiled-coil conformation. The active-site Proton donor is the glutamate 285.

It belongs to the HPF1 family. Interacts with PARP1 (via the PARP catalytic domain). Interacts with PARP2 (via the PARP catalytic domain). Interacts with core nucleosomes in a parp1- and parp2-dependent manner. As to expression, in adult, mainly expressed in gonads.

It localises to the chromosome. The protein resides in the nucleus. Cofactor for serine ADP-ribosylation that confers serine specificity on parp1 and parp2 and plays a key role in DNA damage response. Initiates the repair of double-strand DNA breaks: recruited to DNA damage sites by parp1 and parp2 and switches the amino acid specificity of parp1 and parp2 from aspartate or glutamate to serine residues, licensing serine ADP-ribosylation of target proteins. Serine ADP-ribosylation of target proteins, such as histones, promotes decompaction of chromatin and the recruitment of repair factors leading to the reparation of DNA strand breaks. Serine ADP-ribosylation of proteins constitutes the primary form of ADP-ribosylation of proteins in response to DNA damage. Hpf1 acts by completing the active site of parp1 and parp2: forms a composite active site composed of residues from Hpf1 and parp1 or parp2. While hpf1 promotes the initiation of serine ADP-ribosylation, it restricts the polymerase activity of parp1 and parp2 in order to limit the length of poly-ADP-ribose chains. Hpf1 also promotes tyrosine ADP-ribosylation, probably by conferring tyrosine specificity on parp1. This is Histone PARylation factor 1 from Danio rerio (Zebrafish).